The sequence spans 400 residues: Phosphoglycerate kinase (400 aa).

Substrate-binding positions include Asp-23–Asn-25, Arg-38, His-61–Arg-64, Arg-120, and Arg-153. ATP is bound by residues Lys-203, Glu-325, and Gly-355 to Thr-358.

This sequence belongs to the phosphoglycerate kinase family. As to quaternary structure, monomer.

Its subcellular location is the cytoplasm. The enzyme catalyses (2R)-3-phosphoglycerate + ATP = (2R)-3-phospho-glyceroyl phosphate + ADP. It participates in carbohydrate degradation; glycolysis; pyruvate from D-glyceraldehyde 3-phosphate: step 2/5. The sequence is that of Phosphoglycerate kinase from Methylorubrum populi (strain ATCC BAA-705 / NCIMB 13946 / BJ001) (Methylobacterium populi).